A 375-amino-acid polypeptide reads, in one-letter code: L-asparaginase 2 (375 aa).

The signal sequence occupies residues 1–19; that stretch reads MKKQRMLVLFTALLFVFTG. The segment at 22–46 is disordered; the sequence is HSPETKESPKEKAQTQKVSSASASE. Basic and acidic residues predominate over residues 24 to 35; sequence PETKESPKEKAQ. An Asparaginase/glutaminase domain is found at 51-375; sequence PNIRILATGG…QKIQAYFNEY (325 aa). The active-site O-isoaspartyl threonine intermediate is the threonine 61. Substrate is bound by residues serine 108 and 141 to 142; that span reads TD.

It belongs to the asparaginase 1 family. Homotetramer.

The catalysed reaction is L-asparagine + H2O = L-aspartate + NH4(+). Functionally, catalyzes the conversion of L-asparagine to L-aspartate and ammonium. In Bacillus subtilis (strain 168), this protein is L-asparaginase 2 (ansZ).